The chain runs to 361 residues: D-alanine--D-alanine ligase (361 aa).

The ATP-grasp domain maps to 140 to 345 (KHLFAQAGLD…YAELIEKLVA (206 aa)). ATP is bound at residue 173–228 (EGELGYPCFVKPANLGSSVGISKCRSREELDQAFELAFQYDRKIVVEEGVIGREIE). Positions 299, 312, and 314 each coordinate Mg(2+).

Belongs to the D-alanine--D-alanine ligase family. The cofactor is Mg(2+). Mn(2+) is required as a cofactor.

The protein localises to the cytoplasm. It catalyses the reaction 2 D-alanine + ATP = D-alanyl-D-alanine + ADP + phosphate + H(+). Its pathway is cell wall biogenesis; peptidoglycan biosynthesis. In terms of biological role, cell wall formation. This chain is D-alanine--D-alanine ligase, found in Bacillus licheniformis (strain ATCC 14580 / DSM 13 / JCM 2505 / CCUG 7422 / NBRC 12200 / NCIMB 9375 / NCTC 10341 / NRRL NRS-1264 / Gibson 46).